Consider the following 245-residue polypeptide: Probable transcriptional regulatory protein pc1328 (245 aa).

The protein belongs to the TACO1 family.

It localises to the cytoplasm. This chain is Probable transcriptional regulatory protein pc1328, found in Protochlamydia amoebophila (strain UWE25).